The following is a 185-amino-acid chain: Ribosome-recycling factor (185 aa).

It belongs to the RRF family.

The protein resides in the cytoplasm. Responsible for the release of ribosomes from messenger RNA at the termination of protein biosynthesis. May increase the efficiency of translation by recycling ribosomes from one round of translation to another. This Thermosipho africanus (strain TCF52B) protein is Ribosome-recycling factor.